The following is a 1403-amino-acid chain: Protein FAM135B (1403 aa).

Disordered stretches follow at residues 445–483 (EKNL…EVQE), 514–548 (EDEC…GQTP), 648–669 (REAL…DLSA), and 718–740 (RHAH…LPSG). Over residues 649 to 661 (EALDTKPSQPDHA) the composition is skewed to basic and acidic residues. Residues 731–740 (TESNTSLPSG) are compositionally biased toward polar residues. A phosphoserine mark is found at Ser-775 and Ser-776. Residues 790–819 (TAGFSEDLDPSSKENSPPRHTSLSYGGSRV) are disordered. Residues 802–814 (KENSPPRHTSLSY) show a composition bias toward polar residues.

It belongs to the FAM135 family.

The protein is Protein FAM135B (Fam135b) of Mus musculus (Mouse).